Consider the following 213-residue polypeptide: Large ribosomal subunit protein uL3 (213 aa).

This sequence belongs to the universal ribosomal protein uL3 family. In terms of assembly, part of the 50S ribosomal subunit. Forms a cluster with proteins L14 and L19.

Functionally, one of the primary rRNA binding proteins, it binds directly near the 3'-end of the 23S rRNA, where it nucleates assembly of the 50S subunit. This Bifidobacterium longum subsp. infantis (strain ATCC 15697 / DSM 20088 / JCM 1222 / NCTC 11817 / S12) protein is Large ribosomal subunit protein uL3.